The primary structure comprises 67 residues: MKTKNFRDMTDEELLKEIDGFKTELFNLRFQLATGQLDNPARIREVRKGIARGKTILRERELKINRA.

This sequence belongs to the universal ribosomal protein uL29 family.

The sequence is that of Large ribosomal subunit protein uL29 from Desulfitobacterium hafniense (strain DSM 10664 / DCB-2).